The sequence spans 335 residues: DNA-directed RNA polymerase subunit alpha (335 aa).

The segment at 1–233 (MIRDKISVSI…DLFIPFLHGE (233 aa)) is alpha N-terminal domain (alpha-NTD). Residues 264 to 335 (KEKIAFKHIF…KRFAIDPPRN (72 aa)) are alpha C-terminal domain (alpha-CTD).

This sequence belongs to the RNA polymerase alpha chain family. In plastids the minimal PEP RNA polymerase catalytic core is composed of four subunits: alpha, beta, beta', and beta''. When a (nuclear-encoded) sigma factor is associated with the core the holoenzyme is formed, which can initiate transcription.

It localises to the plastid. The protein localises to the chloroplast. The catalysed reaction is RNA(n) + a ribonucleoside 5'-triphosphate = RNA(n+1) + diphosphate. DNA-dependent RNA polymerase catalyzes the transcription of DNA into RNA using the four ribonucleoside triphosphates as substrates. The chain is DNA-directed RNA polymerase subunit alpha from Pinus koraiensis (Korean pine).